The chain runs to 177 residues: ATP synthase subunit delta (177 aa).

It belongs to the ATPase delta chain family. As to quaternary structure, F-type ATPases have 2 components, F(1) - the catalytic core - and F(0) - the membrane proton channel. F(1) has five subunits: alpha(3), beta(3), gamma(1), delta(1), epsilon(1). F(0) has three main subunits: a(1), b(2) and c(10-14). The alpha and beta chains form an alternating ring which encloses part of the gamma chain. F(1) is attached to F(0) by a central stalk formed by the gamma and epsilon chains, while a peripheral stalk is formed by the delta and b chains.

It localises to the cell inner membrane. Its function is as follows. F(1)F(0) ATP synthase produces ATP from ADP in the presence of a proton or sodium gradient. F-type ATPases consist of two structural domains, F(1) containing the extramembraneous catalytic core and F(0) containing the membrane proton channel, linked together by a central stalk and a peripheral stalk. During catalysis, ATP synthesis in the catalytic domain of F(1) is coupled via a rotary mechanism of the central stalk subunits to proton translocation. In terms of biological role, this protein is part of the stalk that links CF(0) to CF(1). It either transmits conformational changes from CF(0) to CF(1) or is implicated in proton conduction. The chain is ATP synthase subunit delta from Erwinia tasmaniensis (strain DSM 17950 / CFBP 7177 / CIP 109463 / NCPPB 4357 / Et1/99).